Here is a 786-residue protein sequence, read N- to C-terminus: Endonuclease MutS2 (786 aa).

Residue 335 to 342 (GPNTGGKT) coordinates ATP. Positions 711 to 786 (LDLRGERFEN…GLGVTVVELK (76 aa)) constitute a Smr domain.

Belongs to the DNA mismatch repair MutS family. MutS2 subfamily. In terms of assembly, homodimer. Binds to stalled ribosomes, contacting rRNA.

In terms of biological role, endonuclease that is involved in the suppression of homologous recombination and thus may have a key role in the control of bacterial genetic diversity. Its function is as follows. Acts as a ribosome collision sensor, splitting the ribosome into its 2 subunits. Detects stalled/collided 70S ribosomes which it binds and splits by an ATP-hydrolysis driven conformational change. Acts upstream of the ribosome quality control system (RQC), a ribosome-associated complex that mediates the extraction of incompletely synthesized nascent chains from stalled ribosomes and their subsequent degradation. Probably generates substrates for RQC. The sequence is that of Endonuclease MutS2 from Bacillus cereus (strain B4264).